Here is a 433-residue protein sequence, read N- to C-terminus: Glycerol-3-phosphate dehydrogenase [NAD(+)] (433 aa).

NAD(+)-binding positions include 17–22 (GSGNWG), F49, and F117. Position 140 (K140) interacts with substrate. A173 lines the NAD(+) pocket. The interval 187 to 246 (IAYDPPPIDSSRAATPRDRSPNYDSTSANKLPDLTVTSADSNGKDDRGRRTKAKLTPVPE) is disordered. Positions 208 to 227 (NYDSTSANKLPDLTVTSADS) are enriched in polar residues. K283 serves as the catalytic Proton acceptor. The NAD(+) site is built by R349 and Q378. 349–350 (RN) provides a ligand contact to substrate.

Belongs to the NAD-dependent glycerol-3-phosphate dehydrogenase family.

It catalyses the reaction sn-glycerol 3-phosphate + NAD(+) = dihydroxyacetone phosphate + NADH + H(+). This is Glycerol-3-phosphate dehydrogenase [NAD(+)] from Pyricularia oryzae (strain Y34) (Rice blast fungus).